The primary structure comprises 205 residues: Holliday junction branch migration complex subunit RuvA (205 aa).

Positions Met1–Pro64 are domain I. Positions Ser65–Ala143 are domain II. The interval Lys144–Thr153 is flexible linker. Residues Thr153 to Arg205 are domain III.

The protein belongs to the RuvA family. As to quaternary structure, homotetramer. Forms an RuvA(8)-RuvB(12)-Holliday junction (HJ) complex. HJ DNA is sandwiched between 2 RuvA tetramers; dsDNA enters through RuvA and exits via RuvB. An RuvB hexamer assembles on each DNA strand where it exits the tetramer. Each RuvB hexamer is contacted by two RuvA subunits (via domain III) on 2 adjacent RuvB subunits; this complex drives branch migration. In the full resolvosome a probable DNA-RuvA(4)-RuvB(12)-RuvC(2) complex forms which resolves the HJ.

The protein resides in the cytoplasm. Functionally, the RuvA-RuvB-RuvC complex processes Holliday junction (HJ) DNA during genetic recombination and DNA repair, while the RuvA-RuvB complex plays an important role in the rescue of blocked DNA replication forks via replication fork reversal (RFR). RuvA specifically binds to HJ cruciform DNA, conferring on it an open structure. The RuvB hexamer acts as an ATP-dependent pump, pulling dsDNA into and through the RuvAB complex. HJ branch migration allows RuvC to scan DNA until it finds its consensus sequence, where it cleaves and resolves the cruciform DNA. The polypeptide is Holliday junction branch migration complex subunit RuvA (Beijerinckia indica subsp. indica (strain ATCC 9039 / DSM 1715 / NCIMB 8712)).